We begin with the raw amino-acid sequence, 512 residues long: Peroxisomal N(1)-acetyl-spermine/spermidine oxidase (512 aa).

Position 1 is an N-acetylmethionine (Met-1). Positions 1–6 are excised as a propeptide; sequence MQSGGR. FAD is bound by residues Ala-25, Glu-46, Arg-54, and 70–71; that span reads HW. Substrate-binding residues include His-73 and Val-195. Residue Val-248 participates in FAD binding. Asn-321 serves as a coordination point for substrate. Residues Glu-473 and 482-483 contribute to the FAD site; that span reads TT. Residues 510–512 carry the Microbody targeting signal motif; sequence PRL.

The protein belongs to the flavin monoamine oxidase family. As to quaternary structure, monomer. Requires FAD as cofactor.

It localises to the peroxisome. Its subcellular location is the cytoplasm. The enzyme catalyses N(1)-acetylspermine + O2 + H2O = 3-acetamidopropanal + spermidine + H2O2. It catalyses the reaction N(1)-acetylspermidine + O2 + H2O = 3-acetamidopropanal + putrescine + H2O2. It carries out the reaction N(1),N(12)-diacetylspermine + O2 + H2O = 3-acetamidopropanal + N(1)-acetylspermidine + H2O2. It participates in amine and polyamine metabolism; spermine metabolism. Functionally, flavoenzyme which catalyzes the oxidation of N(1)-acetylspermine to spermidine and is thus involved in the polyamine back-conversion. Can also oxidize N(1)-acetylspermidine to putrescine. Substrate specificity: N(1)-acetylspermine = N(1)-acetylspermidine &gt; N(1),N(12)-diacylspermine &gt;&gt; spermine. Does not oxidize spermidine. Plays an important role in the regulation of polyamine intracellular concentration. In Bos taurus (Bovine), this protein is Peroxisomal N(1)-acetyl-spermine/spermidine oxidase (PAOX).